A 351-amino-acid polypeptide reads, in one-letter code: Phenylalanine--tRNA ligase alpha subunit (351 aa).

E266 contributes to the Mg(2+) binding site.

This sequence belongs to the class-II aminoacyl-tRNA synthetase family. Phe-tRNA synthetase alpha subunit type 1 subfamily. As to quaternary structure, tetramer of two alpha and two beta subunits. The cofactor is Mg(2+).

It is found in the cytoplasm. It catalyses the reaction tRNA(Phe) + L-phenylalanine + ATP = L-phenylalanyl-tRNA(Phe) + AMP + diphosphate + H(+). This chain is Phenylalanine--tRNA ligase alpha subunit, found in Anaplasma marginale (strain St. Maries).